We begin with the raw amino-acid sequence, 731 residues long: Dynein axonemal intermediate chain 7 (731 aa).

Disordered stretches follow at residues 1 to 50 (MPPK…NERL) and 285 to 320 (QNTE…VRSE). 2 stretches are compositionally biased toward basic and acidic residues: residues 17–50 (KAEK…NERL) and 296–320 (GKME…VRSE).

This sequence belongs to the DNAI7 family. In terms of assembly, part of the multisubunit axonemal dynein complex formed at least of two heavy chains and a number of intermediate and light chains.

The protein localises to the cell projection. Its subcellular location is the cilium. It is found in the cytoplasm. Via its association with the multisubunit axonemal dynein complex, may be potentially involved in the regulation of cilia function. The chain is Dynein axonemal intermediate chain 7 (dnai7) from Danio rerio (Zebrafish).